A 156-amino-acid chain; its full sequence is Small ribosomal subunit protein uS7 (156 aa).

The protein belongs to the universal ribosomal protein uS7 family. Part of the 30S ribosomal subunit. Contacts proteins S9 and S11.

Its function is as follows. One of the primary rRNA binding proteins, it binds directly to 16S rRNA where it nucleates assembly of the head domain of the 30S subunit. Is located at the subunit interface close to the decoding center, probably blocks exit of the E-site tRNA. The polypeptide is Small ribosomal subunit protein uS7 (Clostridium perfringens (strain ATCC 13124 / DSM 756 / JCM 1290 / NCIMB 6125 / NCTC 8237 / Type A)).